We begin with the raw amino-acid sequence, 921 residues long: MAPLALMGVVLLLGVPHCLGEATPTPSLPPPTANDSDASPEGCQGSYRCQPGVLLPVWEPEDPSLGDKVARAVVYFVAMVYMFLGVSIIADRFMASIEVITSKEKEITITKANGETSVGTVRIWNETVSNLTLMALGSSAPEILLTVIEVCGHNFQAGELGPGTIVGSAAFNMFVVIAVCVYVIPAGESRKIKHLRVFFVTASWSIFAYVWLYLILAVFSPGVVQVWEALLTLIFFPVCVVFAWMADKRLLFYKYVYKRYRTDPRSGIIIGAEGDPPKSIELDGTFVGTEVPGELGALGTGPAEARELDASRREVIQILKDLKQKHPDKDLEQLMGIAKYYALLHQQKSRAFYRIQATRLMTGAGNVLRRHAADAARRPGATDGAPDDEDDGASRIFFEPSLYHCLENCGSVLLSVACQGGEGNSTFYVDYRTEDGSAKAGSDYEYSEGTLVFKPGETQKDLRIGIIDDDIFEEDEHFFVRLLNLRVGDAQGMFEPDGGGRPKGRLVAPLLATVTILDDDHAGIFSFQDRLLHVSECMGTVDVRVVRSSGARGTVRLPYRTVDGTARGGGVHYEDACGELEFGDDETMKTLQVKIVDDEEYEKKDNFFIELGQPQWLKRGISALLLNQGNGDKKITAEQEEAQRIAEMGKPVLGENNRLEVIIEESYDFKNTVDKLIKKTNLALVIGTHSWREQFIEAVTVSAGDEEEDEDGPREERLPSCFDYVMHFLTVFWKVLFACVPPTEYCNGWACFGVCILVIGVLTALIGDLASHFGCTVGLKDSVNAVVFVALGTSIPDTFASKVAALQDQCADASIGNVTGSNAVNVFLGLGVAWSVAAVYWAVQGRPFEVRAGTLAFSVTLFTVFAFVCIAVLLYRRRPQIGGELGGPRGPKLATTALFLGLWFLYILFSSLEAYCHIRGF.

Residues 1–20 form the signal peptide; sequence MAPLALMGVVLLLGVPHCLG. The interval 23–42 is disordered; it reads TPTPSLPPPTANDSDASPEG. A helical transmembrane segment spans residues 69-89; sequence VARAVVYFVAMVYMFLGVSII. N-linked (GlcNAc...) asparagine glycans are attached at residues Asn125 and Asn130. 4 helical membrane-spanning segments follow: residues 131–151, 165–185, 197–217, and 226–246; these read LTLM…IEVC, IVGS…YVIP, VFFV…LILA, and VWEA…AWMA. Residues 248-267 form a putative calmodulin-binding region region; it reads KRLLFYKYVYKRYRTDPRSG. Residues 371 to 391 are disordered; that stretch reads HAADAARRPGATDGAPDDEDD. Calx-beta domains lie at 389-482 and 512-611; these read EDDG…FVRL and ATVT…FIEL. Positions 407, 443, 468, 469, 471, 473, 476, 518, 519, 520, 536, 598, 599, and 600 each coordinate Ca(2+). Residue Ser622 is modified to Phosphoserine. Glu665 lines the Ca(2+) pocket. 6 helical membrane-spanning segments follow: residues 721 to 741, 749 to 769, 786 to 806, 823 to 843, 855 to 875, and 893 to 913; these read CFDY…ACVP, WACF…IGDL, VVFV…VAAL, AVNV…YWAV, LAFS…VLLY, and LATT…SSLE.

The protein belongs to the Ca(2+):cation antiporter (CaCA) (TC 2.A.19) family. SLC8 subfamily. Detected in kidney cortex, in distal convoluted tubules and connecting segments. Detected in brain and spinal cord (at protein level). Detected in brain, especially in hippocampus CA1, CA2 and CA3 fiels, dentate gyrus, cerebellum and brain cortex.

The protein resides in the cell membrane. It localises to the basolateral cell membrane. The catalysed reaction is Ca(2+)(in) + 3 Na(+)(out) = Ca(2+)(out) + 3 Na(+)(in). Calcium transport is down-regulated by Na(+) and stimulated by Ca(2+). Its function is as follows. Mediates the electrogenic exchange of Ca(2+) against Na(+) ions across the cell membrane, and thereby contributes to the regulation of cytoplasmic Ca(2+) levels and Ca(2+)-dependent cellular processes. Contributes to cellular Ca(2+) homeostasis in excitable cells. Contributes to the rapid decrease of cytoplasmic Ca(2+) levels back to baseline after neuronal activation, and thereby contributes to modulate synaptic plasticity, learning and memory. Plays a role in regulating urinary Ca(2+) and Na(+) excretion. The protein is Sodium/calcium exchanger 2 of Mus musculus (Mouse).